Here is a 347-residue protein sequence, read N- to C-terminus: GPN-loop GTPase 2 (347 aa).

12-17 is a binding site for GTP; it reads GSGKST. The Gly-Pro-Asn (GPN)-loop; involved in dimer interface motif lies at 69-71; sequence GPN. Position 175 to 178 (175 to 178) interacts with GTP; that stretch reads SKID.

The protein belongs to the GPN-loop GTPase family. Heterodimers with NPA3/GPN1 or GPN3. Binds to RNA polymerase II (RNAPII).

The protein localises to the cytoplasm. Functionally, small GTPase required for proper localization of RNA polymerase II and III (RNAPII and RNAPIII). May act at an RNAP assembly step prior to nuclear import. Required for establishment of sister chromatid cohesion. In Saccharomyces cerevisiae (strain ATCC 204508 / S288c) (Baker's yeast), this protein is GPN-loop GTPase 2.